Reading from the N-terminus, the 187-residue chain is Adenylate kinase (187 aa).

An ATP-binding site is contributed by 10–15 (GSGKGT). Residues 30 to 59 (STGDMLRAEIAAGSELGKQAKAVMDAGNLV) form an NMP region. AMP-binding positions include Thr31, Arg36, 57 to 59 (NLV), 85 to 88 (GYPR), and Gln92. Residues 126–136 (GRAKEQGRADD) are LID. Position 127 (Arg127) interacts with ATP. AMP contacts are provided by Arg133 and Arg144. Gly172 lines the ATP pocket.

This sequence belongs to the adenylate kinase family. Monomer.

The protein resides in the cytoplasm. The catalysed reaction is AMP + ATP = 2 ADP. The protein operates within purine metabolism; AMP biosynthesis via salvage pathway; AMP from ADP: step 1/1. Catalyzes the reversible transfer of the terminal phosphate group between ATP and AMP. Plays an important role in cellular energy homeostasis and in adenine nucleotide metabolism. This chain is Adenylate kinase, found in Stenotrophomonas maltophilia (strain R551-3).